The following is a 252-amino-acid chain: Exodeoxyribonuclease (252 aa).

E36 is a binding site for Mg(2+). Y106 is a catalytic residue. D145, N147, and D242 together coordinate Mg(2+). The active-site Proton donor/acceptor is the D145.

This sequence belongs to the DNA repair enzymes AP/ExoA family. Requires Mg(2+) as cofactor. The cofactor is Mn(2+).

Its subcellular location is the cytoplasm. The enzyme catalyses Exonucleolytic cleavage in the 3'- to 5'-direction to yield nucleoside 5'-phosphates.. The sequence is that of Exodeoxyribonuclease (exoA) from Bacillus subtilis (strain 168).